A 548-amino-acid polypeptide reads, in one-letter code: MANEVISGEQLQKVIRDAADLVVSSAGVTLGPEGRPVIMSKSYGGPEVTKDGYKVINNLKPEDEKIAKIVELLNQATSQANEKAGDGTTTATILVGNMIKNAHKHIAAQRSRTKLKSGMKRARDEVVKYIQSVAKKINSEEEIAQVGSISANGNSEIGNKIAEAMNKVGKEGVITVEEGKGLDEFSVSVVQGMVFDRGYVSPYFITNPEKMIVEFDNPYVLLANKKLSSIQPMVPLLETIVRSNRAVVIIAEDVEGEALTSLVLSKMRGSLKACAVKAPGFGDRRSEMLEDIRILTGAKTLVSDDLGVTVESLTVEDLGTAKSIIISKDSTTIVDGGGEKTSIDARVKQIKTQIDKTTSDYDKEKLQERLAKLAGGVAVLKVGGATEVEVKERKDRVEDALHATRAAVEEGIVPGGGATLLSAIAVLEKLSSDDDDEQAGINIVKSALKAPISQIVENAGEDASVITYNLLESKDPNRIFDARELKYVDAFKAGIIDPAKVVRVALESAVSVASVLVTTEALIVDLPTKDNGSPSMMPGGGMGGMGGF.

ATP contacts are provided by residues 29 to 32 (TLGP), Lys50, 86 to 90 (DGTTT), Gly416, and Asp497.

Belongs to the chaperonin (HSP60) family. In terms of assembly, forms a cylinder of 14 subunits composed of two heptameric rings stacked back-to-back. Interacts with the co-chaperonin GroES.

The protein localises to the cytoplasm. It carries out the reaction ATP + H2O + a folded polypeptide = ADP + phosphate + an unfolded polypeptide.. Functionally, together with its co-chaperonin GroES, plays an essential role in assisting protein folding. The GroEL-GroES system forms a nano-cage that allows encapsulation of the non-native substrate proteins and provides a physical environment optimized to promote and accelerate protein folding. The protein is Chaperonin GroEL of Neorickettsia risticii (Ehrlichia risticii).